A 788-amino-acid chain; its full sequence is Cadherin-related family member 4 (788 aa).

The signal sequence occupies residues 1–16 (MVLLRLLVFLFAPVVS). The Extracellular portion of the chain corresponds to 17–686 (DLCSLPCFIN…DTEAFWQPQP (670 aa)). Cadherin domains follow at residues 237–338 (LEQA…PPRC), 339–449 (LPAL…APRT), 444–554 (ACAP…EPPF), and 551–674 (EPPF…TPML). Asn242 carries an N-linked (GlcNAc...) asparagine glycan. A helical membrane pass occupies residues 687-707 (WFVVVLTATGALLLLALGWLL). Topologically, residues 708 to 788 (GRLLQGLAQL…NTHTGARRWL (81 aa)) are cytoplasmic.

It localises to the membrane. Its function is as follows. Cadherins are calcium-dependent cell adhesion proteins. They preferentially interact with themselves in a homophilic manner in connecting cells; cadherins may thus contribute to the sorting of heterogeneous cell types. In Homo sapiens (Human), this protein is Cadherin-related family member 4 (CDHR4).